Here is a 69-residue protein sequence, read N- to C-terminus: Cytochrome c oxidase subunit 8A, mitochondrial (69 aa).

Residues methionine 1–glutamine 25 constitute a mitochondrion transit peptide. The short motif at serine 2–leucine 19 is the SIFI-degron element. At isoleucine 26–glycine 36 the chain is on the mitochondrial matrix side. A helical transmembrane segment spans residues threonine 37–serine 60. At histidine 61–glutamate 69 the chain is on the mitochondrial intermembrane side.

This sequence belongs to the cytochrome c oxidase VIII family. Component of the cytochrome c oxidase (complex IV, CIV), a multisubunit enzyme composed of 14 subunits. The complex is composed of a catalytic core of 3 subunits MT-CO1, MT-CO2 and MT-CO3, encoded in the mitochondrial DNA, and 11 supernumerary subunits COX4I, COX5A, COX5B, COX6A, COX6B, COX6C, COX7A, COX7B, COX7C, COX8 and NDUFA4, which are encoded in the nuclear genome. The complex exists as a monomer or a dimer and forms supercomplexes (SCs) in the inner mitochondrial membrane with NADH-ubiquinone oxidoreductase (complex I, CI) and ubiquinol-cytochrome c oxidoreductase (cytochrome b-c1 complex, complex III, CIII), resulting in different assemblies (supercomplex SCI(1)III(2)IV(1) and megacomplex MCI(2)III(2)IV(2)). In response to mitochondrial stress, the precursor protein is ubiquitinated by the SIFI complex in the cytoplasm before mitochondrial import, leading to its degradation. Within the SIFI complex, UBR4 initiates ubiquitin chain that are further elongated or branched by KCMF1.

Its subcellular location is the mitochondrion inner membrane. The protein operates within energy metabolism; oxidative phosphorylation. Component of the cytochrome c oxidase, the last enzyme in the mitochondrial electron transport chain which drives oxidative phosphorylation. The respiratory chain contains 3 multisubunit complexes succinate dehydrogenase (complex II, CII), ubiquinol-cytochrome c oxidoreductase (cytochrome b-c1 complex, complex III, CIII) and cytochrome c oxidase (complex IV, CIV), that cooperate to transfer electrons derived from NADH and succinate to molecular oxygen, creating an electrochemical gradient over the inner membrane that drives transmembrane transport and the ATP synthase. Cytochrome c oxidase is the component of the respiratory chain that catalyzes the reduction of oxygen to water. Electrons originating from reduced cytochrome c in the intermembrane space (IMS) are transferred via the dinuclear copper A center (CU(A)) of subunit 2 and heme A of subunit 1 to the active site in subunit 1, a binuclear center (BNC) formed by heme A3 and copper B (CU(B)). The BNC reduces molecular oxygen to 2 water molecules using 4 electrons from cytochrome c in the IMS and 4 protons from the mitochondrial matrix. In Carlito syrichta (Philippine tarsier), this protein is Cytochrome c oxidase subunit 8A, mitochondrial (COX8A).